Reading from the N-terminus, the 179-residue chain is Early E3 20.1 kDa glycoprotein (179 aa).

N-linked (GlcNAc...) asparagine; by host glycans are attached at residues Asn29, Asn57, Asn70, Asn75, and Asn123.

This sequence belongs to the adenoviridae E3_20 family.

In terms of biological role, E3 proteins seem to be dispensable for virus growth in tissue culture cells. They are potentially important for virus growth under special conditions; E3 region may help adenoviruses to evade the immune surveillance of the host. The sequence is that of Early E3 20.1 kDa glycoprotein from Homo sapiens (Human).